The sequence spans 368 residues: COP9 signalosome complex subunit 5 (368 aa).

Residues isoleucine 56–glycine 193 form the MPN domain. Residues histidine 139, histidine 141, and aspartate 152 each contribute to the Zn(2+) site. A JAMM motif motif is present at residues histidine 139 to aspartate 152. Positions threonine 347–alanine 368 are disordered.

This sequence belongs to the peptidase M67A family. CSN5 subfamily. As to quaternary structure, component of the CSN complex, probably composed of csn-1, csn-2, csn-3, csn-4, csn-5, csn-6 and csn-7. Within the complex it probably interacts directly with csn-1. Interacts with glh-1 and glh-3. Interacts with lag-1. Interacts with kgb-1. A divalent metal cation is required as a cofactor.

It is found in the cytoplasm. It localises to the nucleus. Functionally, probable protease subunit of the COP9 signalosome complex (CSN), a complex involved in various cellular and developmental processes. The CSN complex is an essential regulator of the ubiquitin (Ubl) conjugation pathway by mediating the deneddylation of the cullin subunits of the SCF-type E3 ligase complexes, leading to decrease the Ubl ligase activity of SCF. In the complex, it probably acts as the catalytic center that mediates the cleavage of Nedd8 from cullins. It however has no metalloprotease activity by itself and requires the other subunits of the CSN complex. The CSN complex plays an essential role in embryogenesis and oogenesis and is required to regulate microtubule stability in the early embryo. Mediates mei-3/katanin targeting for degradation at the meiosis to mitosis transition via deneddylation of cul-3. May stabilize glh-1 protein levels by antagonizing kgb-1. This chain is COP9 signalosome complex subunit 5 (csn-5), found in Caenorhabditis elegans.